A 142-amino-acid chain; its full sequence is Transcriptional regulator MraZ (142 aa).

SpoVT-AbrB domains lie at 5–47 (EYQH…PLDE) and 76–119 (ACEV…SKEK).

The protein belongs to the MraZ family. Forms oligomers.

Its subcellular location is the cytoplasm. It localises to the nucleoid. This chain is Transcriptional regulator MraZ, found in Clostridium beijerinckii (strain ATCC 51743 / NCIMB 8052) (Clostridium acetobutylicum).